The primary structure comprises 318 residues: Lipoyl synthase (318 aa).

Residues Cys64, Cys69, Cys75, Cys90, Cys94, Cys97, and Ser304 each contribute to the [4Fe-4S] cluster site. Residues 76–293 (FSGGTATFMI…AEEGYKMGFK (218 aa)) form the Radical SAM core domain.

This sequence belongs to the radical SAM superfamily. Lipoyl synthase family. [4Fe-4S] cluster serves as cofactor.

The protein localises to the cytoplasm. It carries out the reaction [[Fe-S] cluster scaffold protein carrying a second [4Fe-4S](2+) cluster] + N(6)-octanoyl-L-lysyl-[protein] + 2 oxidized [2Fe-2S]-[ferredoxin] + 2 S-adenosyl-L-methionine + 4 H(+) = [[Fe-S] cluster scaffold protein] + N(6)-[(R)-dihydrolipoyl]-L-lysyl-[protein] + 4 Fe(3+) + 2 hydrogen sulfide + 2 5'-deoxyadenosine + 2 L-methionine + 2 reduced [2Fe-2S]-[ferredoxin]. It participates in protein modification; protein lipoylation via endogenous pathway; protein N(6)-(lipoyl)lysine from octanoyl-[acyl-carrier-protein]: step 2/2. In terms of biological role, catalyzes the radical-mediated insertion of two sulfur atoms into the C-6 and C-8 positions of the octanoyl moiety bound to the lipoyl domains of lipoate-dependent enzymes, thereby converting the octanoylated domains into lipoylated derivatives. In Pseudomonas syringae pv. tomato (strain ATCC BAA-871 / DC3000), this protein is Lipoyl synthase.